A 651-amino-acid polypeptide reads, in one-letter code: Acetyl-coenzyme A synthetase (651 aa).

Residues 189–192, Thr311, and Asn335 contribute to the CoA site; that span reads RGGK. ATP is bound by residues 387-389, 411-416, Asp500, and Arg515; these read GEP and DTWWQT. Ser523 lines the CoA pocket. An ATP-binding site is contributed by Arg526. Residues Val537, His539, and Val542 each contribute to the Mg(2+) site. Residue Arg586 coordinates CoA. An N6-acetyllysine modification is found at Lys611.

This sequence belongs to the ATP-dependent AMP-binding enzyme family. The cofactor is Mg(2+). Acetylated. Deacetylation by the SIR2-homolog deacetylase activates the enzyme.

It carries out the reaction acetate + ATP + CoA = acetyl-CoA + AMP + diphosphate. Catalyzes the conversion of acetate into acetyl-CoA (AcCoA), an essential intermediate at the junction of anabolic and catabolic pathways. AcsA undergoes a two-step reaction. In the first half reaction, AcsA combines acetate with ATP to form acetyl-adenylate (AcAMP) intermediate. In the second half reaction, it can then transfer the acetyl group from AcAMP to the sulfhydryl group of CoA, forming the product AcCoA. The sequence is that of Acetyl-coenzyme A synthetase from Brucella melitensis biotype 2 (strain ATCC 23457).